We begin with the raw amino-acid sequence, 181 residues long: Oligoribonuclease (181 aa).

The Exonuclease domain occupies L8–L171. Y129 is a catalytic residue.

This sequence belongs to the oligoribonuclease family.

Its subcellular location is the cytoplasm. In terms of biological role, 3'-to-5' exoribonuclease specific for small oligoribonucleotides. This chain is Oligoribonuclease, found in Bordetella bronchiseptica (strain ATCC BAA-588 / NCTC 13252 / RB50) (Alcaligenes bronchisepticus).